The sequence spans 489 residues: MKIYPDLKQVQELAEKHKANKIPIYGVIPADMLTPSVAYLKLNQGKKYSFILESVTQGESVSRYSFIGSPYRILMANGKTDPLARLERELKEVKTAPVEGLPSFSGGAVGYVSYDCIKYFEPTTEMPLEDTLGLPEAMFFMTDDLVAFDHAYQTVKIISHVCIQQGRPIEEAYEAAVFKINMLKKKLESPEIPLPEQKKVHLGYEAKSNVGEDGYKAFVSNLKEHIFNGDIFQAVPSQRIARRTDLHPFNLYRHLRTVNPSPYMFYIHCDDFDIIGASPELLVKSEHGRIINHPIAGTVPRGKTKEEDEAYAKDLLASVKDRAEHVMLVDLARNDVSRVCDLDTTSVDKLMTIEKFSHVQHLVSQVSGVLRPDKTRFDAFRSIFPAGTVSGSPKVRAIQLVYGLEKEKRGIYAGAVGRWGYEDDNMDTCIAIRTMVYKDGTVYLQAGGGIVFDSDEQDEYVETLNKLRSNVTAIEETEKLYAEEENSSA.

Residues Ser54 and 262-264 contribute to the L-tryptophan site; that span reads PYM. A chorismate-binding site is contributed by 297–298; that stretch reads GT. Glu324 is a Mg(2+) binding site. Ser390 and Ser392 each carry phosphoserine. Residues Tyr412, Arg433, 447-449, and Gly449 contribute to the chorismate site; that span reads GGG. Glu462 serves as a coordination point for Mg(2+). Ser488 carries the phosphoserine modification.

This sequence belongs to the anthranilate synthase component I family. Tetramer of two components I and two components II. It depends on Mg(2+) as a cofactor.

The catalysed reaction is chorismate + L-glutamine = anthranilate + pyruvate + L-glutamate + H(+). It functions in the pathway amino-acid biosynthesis; L-tryptophan biosynthesis; L-tryptophan from chorismate: step 1/5. This is Probable anthranilate synthase component 1 (trp3) from Schizosaccharomyces pombe (strain 972 / ATCC 24843) (Fission yeast).